A 107-amino-acid chain; its full sequence is Universal stress protein B homolog (107 aa).

A run of 2 helical transmembrane segments spans residues T6–A25 and L89–M106.

The protein belongs to the universal stress protein B family.

It localises to the cell inner membrane. The protein is Universal stress protein B homolog of Vibrio cholerae serotype O1 (strain ATCC 39541 / Classical Ogawa 395 / O395).